The primary structure comprises 352 residues: Mitochondrial ubiquitin ligase activator of NFKB 1 (352 aa).

Residues 1–8 (MESGSRPS) are Cytoplasmic-facing. Residues 9 to 29 (LGQVILLGTSSMVTAVLYSIY) traverse the membrane as a helical segment. Topologically, residues 30-238 (RQKAQVAQEL…LLHRQESSVR (209 aa)) are mitochondrial intermembrane. A Glycyl lysine isopeptide (Lys-Gly) (interchain with G-Cter in ubiquitin) cross-link involves residue Lys-52. The helical transmembrane segment at 239–259 (LWKILVLVFGFATCATLFFIL) threads the bilayer. Residues 260-352 (RKQYLHRQER…ITRVIPLYNS (93 aa)) are Cytoplasmic-facing. Lys-299 participates in a covalent cross-link: Glycyl lysine isopeptide (Lys-Gly) (interchain with G-Cter in ubiquitin). The RING-type zinc finger occupies 302–340 (CVVCLSNFKSCVFLECGHVCSCRQCYLALPEPKRCPICR).

As to quaternary structure, homooligomer. Interacts with MAP3K7/TAK1. Interacts with UBC9. Interacts with and sumoylates DNM1L. Interacts with MAVS. Interacts with TP53 (via N-terminus); the interaction leads to ubiquitination and proteasomal degradation of TP53. Post-translationally, ubiquitinated by PRKN during mitophagy, leading to its degradation and enhancement of mitophagy. Deubiquitinated by USP30. Expressed in cortical neurons (at protein level).

Its subcellular location is the mitochondrion outer membrane. The protein resides in the peroxisome. The catalysed reaction is S-ubiquitinyl-[E2 ubiquitin-conjugating enzyme]-L-cysteine + [acceptor protein]-L-lysine = [E2 ubiquitin-conjugating enzyme]-L-cysteine + N(6)-ubiquitinyl-[acceptor protein]-L-lysine.. It functions in the pathway protein modification; protein ubiquitination. Its pathway is protein modification; protein sumoylation. Functionally, exhibits weak E3 ubiquitin-protein ligase activity. E3 ubiquitin ligases accept ubiquitin from an E2 ubiquitin-conjugating enzyme in the form of a thioester and then directly transfer the ubiquitin to targeted substrates. Can ubiquitinate AKT1 preferentially at 'Lys-284' involving 'Lys-48'-linked polyubiquitination and seems to be involved in regulation of Akt signaling by targeting phosphorylated Akt to proteasomal degradation. Mediates polyubiquitination of cytoplasmic TP53 at 'Lys-27' which targets TP53 for proteasomal degradation, thus reducing TP53 levels in the cytoplasm and mitochondrion. Proposed to preferentially act as a SUMO E3 ligase at physiological concentrations. Plays a role in the control of mitochondrial morphology by promoting mitochondrial fragmentation, and influences mitochondrial localization. Likely to promote mitochondrial fission through negatively regulating the mitochondrial fusion proteins MFN1 and MFN2, acting in a pathway that is parallel to the PRKN/PINK1 regulatory pathway. May also be involved in the sumoylation of the membrane fission protein DNM1L. Inhibits cell growth. When overexpressed, activates JNK through MAP3K7/TAK1 and induces caspase-dependent apoptosis. Involved in the modulation of innate immune defense against viruses by inhibiting RIGI-dependent antiviral response. Can mediate RIGI sumoylation and disrupt its polyubiquitination. The polypeptide is Mitochondrial ubiquitin ligase activator of NFKB 1 (Mul1) (Mus musculus (Mouse)).